The primary structure comprises 426 residues: Zinc finger CCCH domain-containing protein 15 (426 aa).

The span at 1–12 shows a compositional bias: low complexity; it reads MPPKKQAQAGGS. 2 disordered regions span residues 1 to 30 and 53 to 74; these read MPPKKQAQAGGSKKAEQKKKEKIIEDKTFG and GQQNPRQVAQSEAEKKLKKDDK. Residues 13–29 show a composition bias toward basic and acidic residues; the sequence is KKAEQKKKEKIIEDKTF. Over residues 53–62 the composition is skewed to polar residues; the sequence is GQQNPRQVAQ. A coiled-coil region spans residues 61–86; it reads AQSEAEKKLKKDDKKKELQELNELFK. Residues 64-74 show a composition bias toward basic and acidic residues; sequence EAEKKLKKDDK. 2 C3H1-type zinc fingers span residues 99 to 126 and 174 to 212; these read DPKSVVCAFFKQGQCTKGDKCKFSHDLT and PKTQIVCKHFLEAIENNKYGWFWVCPGGGDICMYRHALP. Positions 218–285 form a coiled coil; the sequence is KKDKKKEEKE…RRKADFKAGK (68 aa). Ser-231 bears the Phosphoserine mark. The interval 236–260 is required for interaction with DRG1; it reads IERERSALGPNVTKITLESFLAWKK. A disordered region spans residues 299 to 326; sequence PELVNDDDEEADDTRYTQGTGGDEVDDS. Residues Ser-351, Ser-360, and Ser-381 each carry the phosphoserine modification. Residues 358 to 411 form a disordered region; that stretch reads YTSDKDENKLSEASGGRAENGERSDLEEDNEREGTENGAIDAVPVDENLFTGED.

It belongs to the ZC3H15/TMA46 family. In terms of assembly, interacts with DRG1; this interaction prevents DRG1 poly-ubiquitination and degradation by proteasome. DRG1-ZC3H15/DFRP1 complex co-sediments with polysomes. Associates with microtubules.

The protein localises to the cytoplasm. The protein resides in the nucleus. Its function is as follows. Protects DRG1 from proteolytic degradation. Stimulates DRG1 GTPase activity likely by increasing the affinity for the potassium ions. The chain is Zinc finger CCCH domain-containing protein 15 (ZC3H15) from Homo sapiens (Human).